A 726-amino-acid polypeptide reads, in one-letter code: Sensory/regulatory protein RpfC (726 aa).

The next 5 helical transmembrane spans lie at 23-40 (NLIRIIITTLFISYLGWR), 52-72 (TWLILVGELLVSLGLMVAILL), 95-115 (IMAIQGEPASPLYAVCMWVTI), 128-148 (AATAMGSLCFLGAILISPYWK), and 152-172 (YLSWGLLLGLIAVPLYFDSLL). Residues 195 to 417 (NMSHEFRTPL…VFWFELPMAI (223 aa)) enclose the Histidine kinase domain. Phosphohistidine; by autocatalysis is present on histidine 198. Positions 463–581 (RMLVADDHEA…KLLDTLADLA (119 aa)) constitute a Response regulatory domain. Aspartate 512 is modified (4-aspartylphosphate). One can recognise an HPt domain in the interval 618–711 (GEEFERQFVR…KAGKDALDAR (94 aa)). Histidine 657 is subject to Phosphohistidine.

At low DSF concentrations, interacts with RpfF. Autophosphorylated. Activation may require a sequential transfer of a phosphate group from a His in the primary transmitter domain, to an Asp in the receiver domain and to a His in the secondary transmitter domain.

It localises to the cell inner membrane. The enzyme catalyses ATP + protein L-histidine = ADP + protein N-phospho-L-histidine.. Binding of DSF to the sensor region causes allosteric change, which facilitates RpfC autophosphorylation. In terms of biological role, hybrid sensor kinase that regulates diverse biological functions through two distinct molecular mechanisms. At low cell density, the extracellular concentration of the diffusible signaling factor (DSF) is below a threshold, and unphosphorylated RpfC is involved in the negative regulation of DSF synthesis, via direct interaction with the DSF synthase RpfF. Interaction prevents synthesis of DSF, which remains at a basal level. This activity does not involve the phosphorelay mechanism and is not dependent on RpfG. Is also member of the two-component regulatory system RpfG/RpfC, which is involved in the perception and response to DSF, which is essential for cell-cell signaling. At high cell density, the level of extracellular DSF increases and binding of DSF to the sensor region of RpfC causes autophosphorylation of RpfC, which results in the release of RpfF and the activation of RpfG via a four-step phosphorelay. Activation of RpfG leads to the positive regulation of biofilm dispersal and the production of virulence factors. The polypeptide is Sensory/regulatory protein RpfC (rpfC) (Xanthomonas campestris pv. campestris (strain ATCC 33913 / DSM 3586 / NCPPB 528 / LMG 568 / P 25)).